The primary structure comprises 157 residues: Mediator of RNA polymerase II transcription subunit 10 (157 aa).

The protein belongs to the Mediator complex subunit 10 family. Component of the Mediator complex, which is composed of at least 21 subunits that form three structurally distinct submodules. The Mediator head module contains MED6, MED8, MED11, SRB4/MED17, SRB5/MED18, ROX3/MED19, SRB2/MED20 and SRB6/MED22, the middle module contains MED1, MED4, NUT1/MED5, MED7, CSE2/MED9, NUT2/MED10, SRB7/MED21 and SOH1/MED31, and the tail module contains MED2, PGD1/MED3, RGR1/MED14, GAL11/MED15 and SIN4/MED16. The head and the middle modules interact directly with RNA polymerase II, whereas the elongated tail module interacts with gene-specific regulatory proteins. NUT2/MED10 interacts directly with SRB7/MED21.

It is found in the nucleus. Its function is as follows. Component of the Mediator complex, a coactivator involved in the regulated transcription of nearly all RNA polymerase II-dependent genes. Mediator functions as a bridge to convey information from gene-specific regulatory proteins to the basal RNA polymerase II transcription machinery. The Mediator complex, having a compact conformation in its free form, is recruited to promoters by direct interactions with regulatory proteins and serves for the assembly of a functional preinitiation complex with RNA polymerase II and the general transcription factors. The Mediator complex unfolds to an extended conformation and partially surrounds RNA polymerase II, specifically interacting with the unphosphorylated form of the C-terminal domain (CTD) of RNA polymerase II. The Mediator complex dissociates from the RNA polymerase II holoenzyme and stays at the promoter when transcriptional elongation begins. This Saccharomyces cerevisiae (strain ATCC 204508 / S288c) (Baker's yeast) protein is Mediator of RNA polymerase II transcription subunit 10 (NUT2).